Here is a 107-residue protein sequence, read N- to C-terminus: NADH-quinone oxidoreductase subunit K (107 aa).

3 helical membrane passes run 11–31 (LTHY…GVLL), 36–56 (IVLL…FVAF), and 67–87 (IMVF…LALA).

The protein belongs to the complex I subunit 4L family. As to quaternary structure, NDH-1 is composed of 14 different subunits. Subunits NuoA, H, J, K, L, M, N constitute the membrane sector of the complex.

It localises to the cell inner membrane. It catalyses the reaction a quinone + NADH + 5 H(+)(in) = a quinol + NAD(+) + 4 H(+)(out). In terms of biological role, NDH-1 shuttles electrons from NADH, via FMN and iron-sulfur (Fe-S) centers, to quinones in the respiratory chain. The immediate electron acceptor for the enzyme in this species is believed to be ubiquinone. Couples the redox reaction to proton translocation (for every two electrons transferred, four hydrogen ions are translocated across the cytoplasmic membrane), and thus conserves the redox energy in a proton gradient. The protein is NADH-quinone oxidoreductase subunit K of Bdellovibrio bacteriovorus (strain ATCC 15356 / DSM 50701 / NCIMB 9529 / HD100).